Here is a 177-residue protein sequence, read N- to C-terminus: MSRVAKNPVILPAGVEAKFTAAEIVVKGPLGQLAMPLNAGVEVRLEDNALKFAAKDESKASRSMSGTMRALVNNMVTGVSKGFERKLQLVGVGYRAQAQGAALNLTLGFSHPVVHPMPEGVAVETPSQTEIILKGVDKQKVGQVAAEIRAYRAPEPYKGKGVRYAGEQVVLKETKKK.

It belongs to the universal ribosomal protein uL6 family. In terms of assembly, part of the 50S ribosomal subunit.

In terms of biological role, this protein binds to the 23S rRNA, and is important in its secondary structure. It is located near the subunit interface in the base of the L7/L12 stalk, and near the tRNA binding site of the peptidyltransferase center. The protein is Large ribosomal subunit protein uL6 of Laribacter hongkongensis (strain HLHK9).